Here is a 1208-residue protein sequence, read N- to C-terminus: Transient receptor potential cation channel subfamily M member 4 (1208 aa).

Topologically, residues 1–776 (MVGQEKEQSW…SYFWGAPVTA (776 aa)) are cytoplasmic. Positions 172, 215, and 226 each coordinate ATP. Ca(2+) is bound by residues Asp271, Ala393, Asp396, and Glu397. ATP is bound by residues Arg422 and Gly449. A phosphoserine mark is found at Ser527 and Ser538. A helical membrane pass occupies residues 777 to 797 (FLGNVVSYLLFLLLFAHVLLV). Over 798–808 (DFQPTKPGVFE) the chain is Extracellular. Residues 809–829 (LLLYFWAFTLLCEELRQGLGG) form a helical membrane-spanning segment. Ca(2+) is bound by residues Glu822 and Gln825. The Cytoplasmic segment spans residues 830–857 (GWGTLANGGPGPGKAPLRHRLHLYLLDT). A helical membrane pass occupies residues 858 to 878 (WNQCDLLALTCFLLGVGCRLT). Ca(2+) is bound by residues Asn859 and Asp862. The Extracellular portion of the chain corresponds to 879-880 (PG). A helical transmembrane segment spans residues 881-904 (LFDLGRTVLCLDFMIFTLRLLHIF). Over 905 to 924 (TVNKQLGPKIVIVSKMMKDV) the chain is Cytoplasmic. The chain crosses the membrane as a helical span at residues 925-945 (FFFLFFLCVWLVAYGVATEGI). Residues 946-957 (LRPQDRSLPSIL) are Extracellular-facing. Positions 958-978 (RRVFYRPYLQIFGQIPQEEMD) form an intramembrane region, pore-forming. The short motif at 969-971 (FGQ) is the Selectivity filter element. Over 979–1013 (VALMNPSNCSAERGSWAHPEGPVAGSCVSQYANWL) the chain is Extracellular. Cys987 and Cys1005 form a disulfide bridge. The chain crosses the membrane as a helical span at residues 1014-1034 (VVLLLIVFLLVANILLLNLLI). The Cytoplasmic segment spans residues 1035–1208 (AMFSYTFNKV…PPPSPTGSKD (174 aa)). Residues 1070-1170 (APPLIIISHL…EYDRRLRGLE (101 aa)) are calmodulin-binding. Residues 1128 to 1180 (LAQARDKRDSDSERLKRTSQKVDTALKQLGQIREYDRRLRGLEREVQHCSRVL) are a coiled coil. The tract at residues 1130-1135 (QARDKR) is mediates modulation by decavanadate and PIP2-binding. 2 positions are modified to phosphoserine; by PKC: Ser1139 and Ser1146. Residues 1189 to 1208 (HSALLPPGGPPPPSPTGSKD) form a disordered region. A compositionally biased stretch (pro residues) spans 1195–1208 (PGGPPPPSPTGSKD).

Belongs to the transient receptor (TC 1.A.4) family. LTrpC subfamily. TRPM4 sub-subfamily. As to quaternary structure, homotetramer. Post-translationally, phosphorylation by PKC leads to increase the sensitivity to Ca(2+). Sumoylated. Desumoylated by SENP1. As to expression, isoform 1 is highly expressed in the testis with a moderate expression in the brain, spleen and thymus. Isoform 2 is only expressed in the brain and spleen.

The protein localises to the cell membrane. The protein resides in the endoplasmic reticulum. It is found in the golgi apparatus. It catalyses the reaction Na(+)(in) = Na(+)(out). The catalysed reaction is K(+)(in) = K(+)(out). Gating is voltage-dependent and repressed by decavanadate. Calmodulin-binding confers the Ca(2+) sensitivity. ATP is able to restore Ca(2+) sensitivity after desensitization. Phosphatidylinositol 4,5-bisphosphate (PIP2)-binding strongly enhances activity, by increasing the channel's Ca(2+) sensitivity and shifting its voltage dependence of activation towards negative potentials. Activity is also enhanced by 3,5-bis(trifluoromethyl)pyrazole derivative (BTP2). Exhibits pronounced temperature sensitivity, with activities strongly intensifying near physiological temperatures. TRPM4 can adopt distinct conformations at different temperatures, markedly influencing where and how ligands interact with them. Its function is as follows. Calcium-activated selective cation channel that mediates membrane depolarization. While it is activated by increase in intracellular Ca(2+), it is impermeable to it. Mediates transport of monovalent cations (Na(+) &gt; K(+) &gt; Cs(+) &gt; Li(+)), leading to depolarize the membrane. It thereby plays a central role in cadiomyocytes, neurons from entorhinal cortex, dorsal root and vomeronasal neurons, endocrine pancreas cells, kidney epithelial cells, cochlea hair cells etc. Participates in T-cell activation by modulating Ca(2+) oscillations after T lymphocyte activation, which is required for NFAT-dependent IL2 production. Involved in myogenic constriction of cerebral arteries. Controls insulin secretion in pancreatic beta-cells. May also be involved in pacemaking or could cause irregular electrical activity under conditions of Ca(2+) overload. Affects T-helper 1 (Th1) and T-helper 2 (Th2) cell motility and cytokine production through differential regulation of calcium signaling and NFATC1 localization. Enhances cell proliferation through up-regulation of the beta-catenin signaling pathway. Plays a role in keratinocyte differentiation. Lacks channel activity. In Rattus norvegicus (Rat), this protein is Transient receptor potential cation channel subfamily M member 4 (Trpm4).